An 87-amino-acid polypeptide reads, in one-letter code: Small ribosomal subunit protein uS17 (87 aa).

Belongs to the universal ribosomal protein uS17 family. As to quaternary structure, part of the 30S ribosomal subunit.

Its function is as follows. One of the primary rRNA binding proteins, it binds specifically to the 5'-end of 16S ribosomal RNA. This is Small ribosomal subunit protein uS17 from Neisseria meningitidis serogroup C (strain 053442).